The following is an 804-amino-acid chain: Enhancer of polycomb homolog 2 (804 aa).

Disordered stretches follow at residues 372–398, 484–507, 602–623, and 642–669; these read QSSD…PDGS, GFSS…SDRH, QQSQ…KSDC, and NSPT…VQPS. A compositionally biased stretch (low complexity) spans 602–611; the sequence is QQSQQSLQQS. Residues 654–669 show a composition bias toward polar residues; sequence DQNAGHSNLNGVVQPS.

It belongs to the enhancer of polycomb family.

Its subcellular location is the nucleus. Functionally, may play a role in transcription or DNA repair. This is Enhancer of polycomb homolog 2 (epc2) from Xenopus tropicalis (Western clawed frog).